Reading from the N-terminus, the 194-residue chain is Homing endonuclease I-DmoI (194 aa).

One can recognise a DOD-type homing endonuclease domain in the interval 14–147 (LLGLIIGDGG…VSRWLNNLGV (134 aa)). Residues aspartate 21 and glutamate 117 contribute to the active site.

Requires a divalent metal cation as cofactor.

In terms of biological role, endonuclease involved in intron homing. Recognizes DNA in the 23S rRNA gene intron (minimally 5'-CCGGGTAAGTTCCGG-3'), cutting after A-8 on the top and C-11 on the bottom strand. Has a slow turnover rate, cuts the coding strand with a slight preference over the non-coding strand. This Desulfurococcus mucosus (Desulfurococcus mobilis) protein is Homing endonuclease I-DmoI.